A 298-amino-acid chain; its full sequence is Movement protein BC1 (298 aa).

The disordered stretch occupies residues 253–273; that stretch reads LPEASLDPGDSVSQTQSMTKK.

Belongs to the begomovirus movement protein BC1 family. As to quaternary structure, binds to dimeric supercoiled plasmid DNA. In terms of processing, phosphorylated.

Its subcellular location is the host cell membrane. It is found in the host microsome membrane. The protein resides in the host endoplasmic reticulum membrane. Functionally, transports viral genome to neighboring plant cells directly through plasmosdesmata, without any budding. The movement protein allows efficient cell to cell propagation, by bypassing the host cell wall barrier. Begomovirus genome is shuttled out of nucleus by Nuclear shuttle protein (NSP) and the movement protein transports the DNA-NSP complex to cell plasmodesmata and facilitates further movement across the cell wall. This is Movement protein BC1 from Hewittia sublobata (Coralbush).